A 214-amino-acid chain; its full sequence is Thymidylate kinase (214 aa).

An ATP-binding site is contributed by 10 to 17; it reads GGEGAGKS.

The protein belongs to the thymidylate kinase family.

It carries out the reaction dTMP + ATP = dTDP + ADP. Phosphorylation of dTMP to form dTDP in both de novo and salvage pathways of dTTP synthesis. The sequence is that of Thymidylate kinase from Brucella suis (strain ATCC 23445 / NCTC 10510).